Consider the following 490-residue polypeptide: GTPase Der (490 aa).

2 EngA-type G domains span residues 3–166 (PVVA…MEDL) and 203–376 (IKLA…DSST). Residues 9 to 16 (GRPNVGKS), 56 to 60 (DTGGI), 118 to 121 (NKTD), 209 to 216 (GRPNVGKS), 256 to 260 (DTAGV), and 321 to 324 (NKWD) each bind GTP. Residues 377–461 (RRVGTSMLTR…PIRIQFKEGE (85 aa)) enclose the KH-like domain.

The protein belongs to the TRAFAC class TrmE-Era-EngA-EngB-Septin-like GTPase superfamily. EngA (Der) GTPase family. Associates with the 50S ribosomal subunit.

Its function is as follows. GTPase that plays an essential role in the late steps of ribosome biogenesis. The chain is GTPase Der from Escherichia coli O127:H6 (strain E2348/69 / EPEC).